The sequence spans 529 residues: Bifunctional purine biosynthesis protein PurH (529 aa).

Residues 1–148 (MQQRRPVRRA…KNHKDVAIVV (148 aa)) form the MGS-like domain. An N6-acetyllysine modification is found at K287.

It belongs to the PurH family.

It carries out the reaction (6R)-10-formyltetrahydrofolate + 5-amino-1-(5-phospho-beta-D-ribosyl)imidazole-4-carboxamide = 5-formamido-1-(5-phospho-D-ribosyl)imidazole-4-carboxamide + (6S)-5,6,7,8-tetrahydrofolate. It catalyses the reaction IMP + H2O = 5-formamido-1-(5-phospho-D-ribosyl)imidazole-4-carboxamide. It participates in purine metabolism; IMP biosynthesis via de novo pathway; 5-formamido-1-(5-phospho-D-ribosyl)imidazole-4-carboxamide from 5-amino-1-(5-phospho-D-ribosyl)imidazole-4-carboxamide (10-formyl THF route): step 1/1. It functions in the pathway purine metabolism; IMP biosynthesis via de novo pathway; IMP from 5-formamido-1-(5-phospho-D-ribosyl)imidazole-4-carboxamide: step 1/1. This Escherichia coli O8 (strain IAI1) protein is Bifunctional purine biosynthesis protein PurH.